The primary structure comprises 63 residues: Overexpressed in colon carcinoma 1 protein homolog (63 aa).

The segment covering M1–S10 has biased composition (polar residues). A disordered region spans residues M1–G39.

This sequence belongs to the OCC1 family.

The chain is Overexpressed in colon carcinoma 1 protein homolog from Mus musculus (Mouse).